A 385-amino-acid polypeptide reads, in one-letter code: MLHNTFFICETNQIMNEIEKAKGIILNRNMNDIWSALLIEVKKSNLIIKSTDRNIFFESTISIVSETDFKVLINASNFYDAVKAFNFYKKIKIVFNENNSKLEIMGELNDEKEEYEDHLKEPTFSYEEIENYNYDMVNEDYTFGIEIKQKSFKKVINRIAFSAHLDESKNVLNGVYFSKDEDSKLLLVSTNGHRMSICKTEVIVEEDVNFIVPVKIFNFLKHLMSGEGMVKIKFSDKKFYVEFDNYKIACSLINGNYPDYKSIIPKEQKNKSLVSLGILKDRLARVNLYVDKSRKLVLTFSELQLKLLGEDLITGRKGEFFIKDPNYLYDGADEVMAINISYFVEAISVFETSKIEIQFNSGNVLKLSEPENFNFTHLIMPMSLG.

The protein belongs to the beta sliding clamp family. In terms of assembly, forms a ring-shaped head-to-tail homodimer around DNA which binds and tethers DNA polymerases and other proteins to the DNA. The DNA replisome complex has a single clamp-loading complex (3 tau and 1 each of delta, delta', psi and chi subunits) which binds 3 Pol III cores (1 core on the leading strand and 2 on the lagging strand) each with a beta sliding clamp dimer. Additional proteins in the replisome are other copies of gamma, psi and chi, Ssb, DNA helicase and RNA primase.

It is found in the cytoplasm. Functionally, confers DNA tethering and processivity to DNA polymerases and other proteins. Acts as a clamp, forming a ring around DNA (a reaction catalyzed by the clamp-loading complex) which diffuses in an ATP-independent manner freely and bidirectionally along dsDNA. Initially characterized for its ability to contact the catalytic subunit of DNA polymerase III (Pol III), a complex, multichain enzyme responsible for most of the replicative synthesis in bacteria; Pol III exhibits 3'-5' exonuclease proofreading activity. The beta chain is required for initiation of replication as well as for processivity of DNA replication. This chain is Beta sliding clamp (dnaN), found in Borreliella burgdorferi (strain ATCC 35210 / DSM 4680 / CIP 102532 / B31) (Borrelia burgdorferi).